The following is a 1043-amino-acid chain: Unconventional myosin-Ia (1043 aa).

The region spanning 8 to 694 (VGVEDLVLLE…TLFYLEEQRR (687 aa)) is the Myosin motor domain. An ATP-binding site is contributed by 101–108 (GESGSGKT). An actin-binding region spans residues 571–593 (VAILMKNLYSKSPNYIRCIKPNE). 3 IQ domains span residues 697 to 719 (LQQLATLIQKIYRGWRCRTHYQL), 720 to 742 (MRKSQILISSWFRGNMQKKCYGK), and 743 to 772 (IKASVLLIQAFVRGWKARKNYRKYFRSEAA). Positions 858-1042 (KASYPQSVPI…KGSHCLEVTV (185 aa)) constitute a TH1 domain.

It belongs to the TRAFAC class myosin-kinesin ATPase superfamily. Myosin family. Phosphorylated by ALPK1.

Functionally, involved in directing the movement of organelles along actin filaments. The sequence is that of Unconventional myosin-Ia (MYO1A) from Homo sapiens (Human).